Here is a 160-residue protein sequence, read N- to C-terminus: 3-hydroxyacyl-[acyl-carrier-protein] dehydratase FabZ (160 aa).

The active site involves histidine 60.

This sequence belongs to the thioester dehydratase family. FabZ subfamily.

The protein resides in the cytoplasm. It carries out the reaction a (3R)-hydroxyacyl-[ACP] = a (2E)-enoyl-[ACP] + H2O. Functionally, involved in unsaturated fatty acids biosynthesis. Catalyzes the dehydration of short chain beta-hydroxyacyl-ACPs and long chain saturated and unsaturated beta-hydroxyacyl-ACPs. The protein is 3-hydroxyacyl-[acyl-carrier-protein] dehydratase FabZ of Rhodospirillum rubrum (strain ATCC 11170 / ATH 1.1.1 / DSM 467 / LMG 4362 / NCIMB 8255 / S1).